A 284-amino-acid polypeptide reads, in one-letter code: 4-hydroxybenzoate octaprenyltransferase (284 aa).

9 helical membrane-spanning segments follow: residues 19–39 (IPIL…SHGL), 42–62 (ISYL…GCII), 85–105 (GQLS…VAFI), 107–127 (VLFL…LAIL), 134–154 (FFAI…FMAF), 165–185 (AWIF…IYAL), 211–231 (ILLF…YCDF), 233–253 (SFFY…YFLY), and 261–281 (CINA…MAVI).

The protein belongs to the UbiA prenyltransferase family. It depends on Mg(2+) as a cofactor.

It localises to the cell inner membrane. It carries out the reaction all-trans-octaprenyl diphosphate + 4-hydroxybenzoate = 4-hydroxy-3-(all-trans-octaprenyl)benzoate + diphosphate. It participates in cofactor biosynthesis; ubiquinone biosynthesis. Its function is as follows. Catalyzes the prenylation of para-hydroxybenzoate (PHB) with an all-trans polyprenyl group. Mediates the second step in the final reaction sequence of ubiquinone-8 (UQ-8) biosynthesis, which is the condensation of the polyisoprenoid side chain with PHB, generating the first membrane-bound Q intermediate 3-octaprenyl-4-hydroxybenzoate. The chain is 4-hydroxybenzoate octaprenyltransferase from Francisella tularensis subsp. novicida (strain U112).